Reading from the N-terminus, the 137-residue chain is Small ribosomal subunit protein uS12 (137 aa).

Positions 1 to 57 are disordered; the sequence is MPTINQLVRKPRKSKVEKSKSPALNVGYNSLKRVPTNESAPQKRGVATRVGTMTPKK. The residue at position 102 (Asp102) is a 3-methylthioaspartic acid.

This sequence belongs to the universal ribosomal protein uS12 family. Part of the 30S ribosomal subunit. Contacts proteins S8 and S17. May interact with IF1 in the 30S initiation complex.

Its function is as follows. With S4 and S5 plays an important role in translational accuracy. Interacts with and stabilizes bases of the 16S rRNA that are involved in tRNA selection in the A site and with the mRNA backbone. Located at the interface of the 30S and 50S subunits, it traverses the body of the 30S subunit contacting proteins on the other side and probably holding the rRNA structure together. The combined cluster of proteins S8, S12 and S17 appears to hold together the shoulder and platform of the 30S subunit. This is Small ribosomal subunit protein uS12 from Streptococcus gordonii (strain Challis / ATCC 35105 / BCRC 15272 / CH1 / DL1 / V288).